The sequence spans 296 residues: 4-hydroxybenzoate octaprenyltransferase (296 aa).

8 helical membrane-spanning segments follow: residues 28–48, 52–72, 102–122, 146–166, 169–189, 219–239, 241–261, and 275–295; these read PIGI…AGKG, LANI…GCVI, ALVF…CTNA, YYPQ…AFTA, GELP…TVGY, VIIL…GSKF, LGMW…WEFW, and FLHN…DYAL.

The protein belongs to the UbiA prenyltransferase family. Mg(2+) is required as a cofactor.

The protein localises to the cell inner membrane. The catalysed reaction is all-trans-octaprenyl diphosphate + 4-hydroxybenzoate = 4-hydroxy-3-(all-trans-octaprenyl)benzoate + diphosphate. Its pathway is cofactor biosynthesis; ubiquinone biosynthesis. Catalyzes the prenylation of para-hydroxybenzoate (PHB) with an all-trans polyprenyl group. Mediates the second step in the final reaction sequence of ubiquinone-8 (UQ-8) biosynthesis, which is the condensation of the polyisoprenoid side chain with PHB, generating the first membrane-bound Q intermediate 3-octaprenyl-4-hydroxybenzoate. The protein is 4-hydroxybenzoate octaprenyltransferase of Pseudomonas fluorescens (strain Pf0-1).